Here is a 518-residue protein sequence, read N- to C-terminus: D-aminopeptidase (518 aa).

The Nucleophile role is filled by S62. The active-site Proton donor/acceptor is the K65. The segment at 477 to 487 is important for specificity; the sequence is QRSMDAPSPGE. D481 lines the substrate pocket.

Belongs to the peptidase S12 family. Homodimer.

It carries out the reaction Release of an N-terminal D-amino acid from a peptide, Xaa-|-Yaa-, in which Xaa is preferably D-Ala, D-Ser or D-Thr. D-amino acid amides and methyl esters also are hydrolyzed, as is glycine amide.. Inhibited by beta-lactam compounds such as 6-aminopenicillic acid, 7-aminocephalosporanic acid, benzylpenicillin and ampicillin. Inhibited by p-chloromercuribenzoate. Hydrolyzes N-terminal residues in D-amino acid-containing peptides. This Brucella abortus (strain S19) protein is D-aminopeptidase.